The following is a 118-amino-acid chain: Large ribosomal subunit protein eL18 (118 aa).

The protein belongs to the eukaryotic ribosomal protein eL18 family.

This chain is Large ribosomal subunit protein eL18 (rpl18e), found in Sulfolobus acidocaldarius (strain ATCC 33909 / DSM 639 / JCM 8929 / NBRC 15157 / NCIMB 11770).